Reading from the N-terminus, the 503-residue chain is Mitogen-activated protein kinase kinae mkk2 (503 aa).

The segment at 1-130 (MSSSPVPLLR…ASGPASASSS (130 aa)) is disordered. Residues 53–66 (APQPQRPSTRPAPP) are compositionally biased toward pro residues. Residues 100–115 (TGLNESTGHSRSSSFT) are compositionally biased toward polar residues. Over residues 121–130 (ASGPASASSS) the composition is skewed to low complexity. The Protein kinase domain maps to 211–481 (IIELGSLGEG…PWRMLEHPWM (271 aa)). Residues 217–225 (LGEGAGGAV) and Lys240 each bind ATP. Catalysis depends on Asp338, which acts as the Proton acceptor.

This sequence belongs to the protein kinase superfamily. STE Ser/Thr protein kinase family. MAP kinase kinase subfamily.

It catalyses the reaction L-seryl-[protein] + ATP = O-phospho-L-seryl-[protein] + ADP + H(+). The catalysed reaction is L-threonyl-[protein] + ATP = O-phospho-L-threonyl-[protein] + ADP + H(+). In terms of biological role, mitogen-activated kinase kinase (MAPKK), part of the cell wall integrity (CWI) signaling pathway composed by three protein kinases bck1, mkk2 and mpkA and responsible for the maintaining of cell-wall integrity balance. The CWI pathway also regulates the oxidative stress response, as well as the production of some secondary metabolites including pyomelanin. The polypeptide is Mitogen-activated protein kinase kinae mkk2 (Aspergillus fumigatus (strain CBS 144.89 / FGSC A1163 / CEA10) (Neosartorya fumigata)).